Reading from the N-terminus, the 361-residue chain is Homocitrate synthase (361 aa).

One can recognise a Pyruvate carboxyltransferase domain in the interval 1–251; it reads MVLDSTLREG…KYRLDLLYRV (251 aa). Residue Arg-8 coordinates 2-oxoglutarate. Glu-9 contributes to the Mg(2+) binding site. 2-oxoglutarate is bound by residues His-68, Arg-128, and Thr-162. Mg(2+) contacts are provided by His-188 and His-190. The Proton acceptor role is filled by His-282.

This sequence belongs to the alpha-IPM synthase/homocitrate synthase family. Homocitrate synthase LYS20/LYS21 subfamily. It depends on Mg(2+) as a cofactor. Mn(2+) is required as a cofactor.

The catalysed reaction is acetyl-CoA + 2-oxoglutarate + H2O = (2R)-homocitrate + CoA + H(+). It functions in the pathway amino-acid biosynthesis; L-lysine biosynthesis via AAA pathway; L-alpha-aminoadipate from 2-oxoglutarate: step 1/5. In terms of biological role, catalyzes the aldol-type condensation of 2-oxoglutarate with acetyl-CoA to yield homocitrate. Carries out the first step of the alpha-aminoadipate (AAA) lysine biosynthesis pathway. This chain is Homocitrate synthase, found in Pyrococcus abyssi (strain GE5 / Orsay).